The primary structure comprises 187 residues: UPF0215 protein PAE0952 (187 aa).

It belongs to the UPF0215 family.

This Pyrobaculum aerophilum (strain ATCC 51768 / DSM 7523 / JCM 9630 / CIP 104966 / NBRC 100827 / IM2) protein is UPF0215 protein PAE0952.